The sequence spans 729 residues: Cellulose synthase-like protein E1 (729 aa).

2 consecutive transmembrane segments (helical) span residues Val-29–Tyr-49 and Leu-64–Gln-84. Active-site residues include Asp-152 and Asp-443. 5 consecutive transmembrane segments (helical) span residues Leu-526–Phe-546, Trp-553–Leu-573, Met-644–Ala-664, Gln-680–Leu-700, and Met-709–Leu-729.

It belongs to the glycosyltransferase 2 family. Plant cellulose synthase-like E subfamily.

The protein resides in the golgi apparatus membrane. Functionally, thought to be a Golgi-localized beta-glycan synthase that polymerize the backbones of noncellulosic polysaccharides (hemicelluloses) of plant cell wall. This Arabidopsis thaliana (Mouse-ear cress) protein is Cellulose synthase-like protein E1 (CSLE1).